Here is a 242-residue protein sequence, read N- to C-terminus: Type III pantothenate kinase (242 aa).

Residue Asp-7–Lys-14 participates in ATP binding. Substrate is bound by residues Tyr-88 and Gly-95 to Arg-98. Asp-97 acts as the Proton acceptor in catalysis. Residue Asp-117 coordinates K(+). Thr-120 provides a ligand contact to ATP. Substrate is bound at residue Thr-172.

The protein belongs to the type III pantothenate kinase family. As to quaternary structure, homodimer. It depends on NH4(+) as a cofactor. K(+) serves as cofactor.

The protein resides in the cytoplasm. The enzyme catalyses (R)-pantothenate + ATP = (R)-4'-phosphopantothenate + ADP + H(+). It participates in cofactor biosynthesis; coenzyme A biosynthesis; CoA from (R)-pantothenate: step 1/5. Its function is as follows. Catalyzes the phosphorylation of pantothenate (Pan), the first step in CoA biosynthesis. The protein is Type III pantothenate kinase of Akkermansia muciniphila (strain ATCC BAA-835 / DSM 22959 / JCM 33894 / BCRC 81048 / CCUG 64013 / CIP 107961 / Muc).